The primary structure comprises 291 residues: Pituitary-specific positive transcription factor 1 (291 aa).

Positions 5 to 13 match the 9aaTAD motif; it reads AFTSADTFI. One can recognise a POU-specific domain in the interval 124-198; it reads MDSPEIRELE…ILSKWLEEAE (75 aa). A DNA-binding region (homeobox) is located at residues 214 to 273; that stretch reads KRKRRTTISIAAKDALERHFGEQNKPSSQEIMRMAEELNLEKEVVRVWFCNRRQREKRVK.

Belongs to the POU transcription factor family. Class-1 subfamily. In terms of assembly, interacts with PITX1. Interacts with LHX3. Interacts with ELK1.

The protein localises to the nucleus. In terms of biological role, transcription factor involved in the specification of the lactotrope, somatotrope, and thyrotrope phenotypes in the developing anterior pituitary. Activates growth hormone and prolactin genes. Specifically binds to the consensus sequence 5'-TAAAT-3'. The chain is Pituitary-specific positive transcription factor 1 (POU1F1) from Macaca mulatta (Rhesus macaque).